An 876-amino-acid polypeptide reads, in one-letter code: Phosphoenolpyruvate carboxylase (876 aa).

Residues H138 and K543 contribute to the active site.

Belongs to the PEPCase type 1 family. It depends on Mg(2+) as a cofactor.

It carries out the reaction oxaloacetate + phosphate = phosphoenolpyruvate + hydrogencarbonate. Functionally, forms oxaloacetate, a four-carbon dicarboxylic acid source for the tricarboxylic acid cycle. The protein is Phosphoenolpyruvate carboxylase of Pseudomonas fluorescens (strain ATCC BAA-477 / NRRL B-23932 / Pf-5).